The chain runs to 88 residues: Three-finger toxin 3FTx-2 (88 aa).

Residues 1–21 (MKTLLLTLVVVTIVCLDLGNT) form the signal peptide. Cystine bridges form between Cys27–Cys48, Cys41–Cys66, Cys70–Cys81, and Cys82–Cys87.

This sequence belongs to the three-finger toxin family. Ancestral subfamily. Orphan group II sub-subfamily. Expressed by the venom gland.

The protein localises to the secreted. Its function is as follows. Binds with low affinity to muscular (alpha-1-beta-1-delta-epsilon/CHRNA1-CHRNB1-CHRND-CHRNE) and very low affinity to neuronal (alpha-7/CHRNA7) nicotinic acetylcholine receptor (nAChR). In Micrurus corallinus (Brazilian coral snake), this protein is Three-finger toxin 3FTx-2.